A 458-amino-acid chain; its full sequence is Methylenetetrahydrofolate--tRNA-(uracil-5-)-methyltransferase TrmFO (458 aa).

Residue 12–17 (GAGLAG) participates in FAD binding.

The protein belongs to the MnmG family. TrmFO subfamily. FAD serves as cofactor.

The protein resides in the cytoplasm. The catalysed reaction is uridine(54) in tRNA + (6R)-5,10-methylene-5,6,7,8-tetrahydrofolate + NADH + H(+) = 5-methyluridine(54) in tRNA + (6S)-5,6,7,8-tetrahydrofolate + NAD(+). It catalyses the reaction uridine(54) in tRNA + (6R)-5,10-methylene-5,6,7,8-tetrahydrofolate + NADPH + H(+) = 5-methyluridine(54) in tRNA + (6S)-5,6,7,8-tetrahydrofolate + NADP(+). Functionally, catalyzes the folate-dependent formation of 5-methyl-uridine at position 54 (M-5-U54) in all tRNAs. The polypeptide is Methylenetetrahydrofolate--tRNA-(uracil-5-)-methyltransferase TrmFO (Deinococcus geothermalis (strain DSM 11300 / CIP 105573 / AG-3a)).